A 784-amino-acid chain; its full sequence is MKKRIPTLLATMIATALYSQQGLAADLASQCMLGVPSYDRPLVQGDTNDLPVTINADHAKGDYPDDAVFTGSVDIMQGNSRLQADEVQLHQKEAPGQPEPVRTVDALGNVHYDDNQVILKGPKGWANLNTKDTNVWEGDYQMVGRQGRGKADLMKQRGENRYTILDNGSFTSCLPGSDTWSVVGSEIIHDREEQVAEIWNARFKVGPVPIFYSPYLQLPVGDKRRSGFLIPNAKYTTTNYFEFYLPYYWNIAPNMDATITPHYMHRRGNIMWENEFRYLSQAGAGLMELDYLPSDKVYEDEHPNDDSSRRWLFYWNHSGVMDQVWRFNVDYTKVSDPSYFNDFDNKYGSSTDGYATQKFSVGYAVQNFNATVSTKQFQVFSEQNTSSYSAEPQLDVNYYQNDVGPFDTRIYGQAVHFVNTRDDMPEATRVHLEPTINLPLSNNWGSINTEAKLLATHYQQTNLDWYNSRNTTKLDESVNRVMPQFKVDGKMVFERDMEMLAPGYTQTLEPRAQYLYVPYRDQSDIYNYDSSLLQSDYSGLFRDRTYGGLDRIASANQVTTGVTSRIYDDAAVERFNISVGQIYYFTESRTGDDNITWENDDKTGSLVWAGDTYWRISERWGLRGGIQYDTRLDNVATSNSSIEYRRDEDRLVQLNYRYASPEYIQATLPKYYSTAEQYKNGISQVGAVASWPIADRWSIVGAYYYDTNANKQADSMLGVQYSSCCYAIRVGYERKLNGWDNDKQHAVYDNAIGFNIELRGLSSNYGLGTQEMLRSNILPYQNTL.

Positions 1–24 are cleaved as a signal peptide; it reads MKKRIPTLLATMIATALYSQQGLA. Cystine bridges form between Cys-31-Cys-724 and Cys-173-Cys-725.

It belongs to the LptD family. Component of the lipopolysaccharide transport and assembly complex. Interacts with LptE and LptA. May interact with LptE during assembly of LptD by the beta-barrel assembly machine (BAM). Also interacts with LptM, which promotes the efficient assembly of the LptDE translocon by the BAM complex. Contains two intramolecular disulfide bonds. At least one disulfide bond is required for activity, and protein is probably fully oxidized in vivo.

The protein resides in the cell outer membrane. Together with LptE, is involved in the assembly of lipopolysaccharide (LPS) at the surface of the outer membrane. Contributes to n-hexane resistance. The protein is LPS-assembly protein LptD of Escherichia coli (strain K12).